The primary structure comprises 112 residues: MAHCSTTAPFVDAMPASPQVTPAESEVVEIDEANDRPWVTVVWDDPVNLMHYVTYIFQKLFGYSKAKATELMMQVHSEGKAVVSSGSRDKVENDVRKLHAAGLWATMQHDGS.

The protein belongs to the ClpS family. Binds to the N-terminal domain of the chaperone ClpA.

Involved in the modulation of the specificity of the ClpAP-mediated ATP-dependent protein degradation. The chain is ATP-dependent Clp protease adapter protein ClpS from Rhodococcus jostii (strain RHA1).